A 295-amino-acid polypeptide reads, in one-letter code: Small ribosomal subunit protein uS2 (295 aa).

An N-acetylserine modification is found at Ser-2. Position 43 is a phosphoserine (Ser-43). Residue Lys-52 is modified to N6-acetyllysine. Residues Thr-54–Gln-113 are interaction with PPP1R16B. The residue at position 89 (Lys-89) is an N6-acetyllysine; alternate. Lys-89 is covalently cross-linked (Glycyl lysine isopeptide (Lys-Gly) (interchain with G-Cter in SUMO2); alternate). Thr-97 bears the Phosphothreonine mark. Laminin-binding stretches follow at residues Ile-161–Arg-180 and Arg-205–Gly-229. [DE]-W-[ST] repeat units lie at residues Glu-230–Thr-232, Asp-247–Ser-249, Asp-266–Ser-268, Asp-275–Ser-277, and Glu-293–Ser-295. The interval Gln-242–Ser-295 is laminin-binding. Residues Asp-266–Ser-295 form a disordered region.

The protein belongs to the universal ribosomal protein uS2 family. In terms of assembly, monomer (37LRP) and homodimer (67LR). Component of the small ribosomal subunit. Mature ribosomes consist of a small (40S) and a large (60S) subunit. The 40S subunit contains about 33 different proteins and 1 molecule of RNA (18S). The 60S subunit contains about 49 different proteins and 3 molecules of RNA (28S, 5.8S and 5S). Interacts with RPS21. Interacts with several laminins including at least LAMB1. Interacts with MDK. The mature dimeric form interacts with PPP1R16B (via its fourth ankyrin repeat). Interacts with PPP1CA only in the presence of PPP1R16B. In terms of processing, acylated. Acylation may be a prerequisite for conversion of the monomeric 37 kDa laminin receptor precursor (37LRP) to the mature dimeric 67 kDa laminin receptor (67LR), and may provide a mechanism for membrane association. Cleaved by stromelysin-3 (ST3) at the cell surface. Cleavage by stromelysin-3 may be a mechanism to alter cell-extracellular matrix interactions. As to expression, expressed in most neurons and in a subset of glial cells. The overall distribution of LR correlates with that reported for laminin-1 but also with brain regions classically associated with prion-related neurodegeneration.

It is found in the cell membrane. Its subcellular location is the cytoplasm. The protein resides in the nucleus. In terms of biological role, required for the assembly and/or stability of the 40S ribosomal subunit. Required for the processing of the 20S rRNA-precursor to mature 18S rRNA in a late step of the maturation of 40S ribosomal subunits. Also functions as a cell surface receptor for laminin. Plays a role in cell adhesion to the basement membrane and in the consequent activation of signaling transduction pathways. May play a role in cell fate determination and tissue morphogenesis. Also acts as a receptor for several other ligands, including the pathogenic prion protein, viruses, and bacteria. Acts as a PPP1R16B-dependent substrate of PPP1CA. The chain is Small ribosomal subunit protein uS2 (Rpsa) from Rattus norvegicus (Rat).